We begin with the raw amino-acid sequence, 201 residues long: Dephospho-CoA kinase (201 aa).

The region spanning 3 to 201 (VIGLTGGIAS…WKERIEKNPR (199 aa)) is the DPCK domain. Residue 11-16 (ASGKST) coordinates ATP.

It belongs to the CoaE family.

The protein resides in the cytoplasm. It catalyses the reaction 3'-dephospho-CoA + ATP = ADP + CoA + H(+). It functions in the pathway cofactor biosynthesis; coenzyme A biosynthesis; CoA from (R)-pantothenate: step 5/5. Functionally, catalyzes the phosphorylation of the 3'-hydroxyl group of dephosphocoenzyme A to form coenzyme A. The protein is Dephospho-CoA kinase of Geobacter metallireducens (strain ATCC 53774 / DSM 7210 / GS-15).